The following is a 329-amino-acid chain: Holliday junction branch migration complex subunit RuvB (329 aa).

Residues 1–181 (MNELLHQHKA…FGIPLHLEFY (181 aa)) form a large ATPase domain (RuvB-L) region. ATP is bound by residues Leu20, Arg21, Gly62, Lys65, Thr66, Thr67, Arg171, Tyr181, and Arg218. Thr66 contributes to the Mg(2+) binding site. Residues 182–252 (SVEELMLVIK…FADSALFNLG (71 aa)) are small ATPAse domain (RuvB-S). The tract at residues 255–329 (KSGLDKMDIK…IEHLMNYKYI (75 aa)) is head domain (RuvB-H). DNA contacts are provided by Arg308 and Arg313.

Belongs to the RuvB family. In terms of assembly, homohexamer. Forms an RuvA(8)-RuvB(12)-Holliday junction (HJ) complex. HJ DNA is sandwiched between 2 RuvA tetramers; dsDNA enters through RuvA and exits via RuvB. An RuvB hexamer assembles on each DNA strand where it exits the tetramer. Each RuvB hexamer is contacted by two RuvA subunits (via domain III) on 2 adjacent RuvB subunits; this complex drives branch migration. In the full resolvosome a probable DNA-RuvA(4)-RuvB(12)-RuvC(2) complex forms which resolves the HJ.

It is found in the cytoplasm. The catalysed reaction is ATP + H2O = ADP + phosphate + H(+). In terms of biological role, the RuvA-RuvB-RuvC complex processes Holliday junction (HJ) DNA during genetic recombination and DNA repair, while the RuvA-RuvB complex plays an important role in the rescue of blocked DNA replication forks via replication fork reversal (RFR). RuvA specifically binds to HJ cruciform DNA, conferring on it an open structure. The RuvB hexamer acts as an ATP-dependent pump, pulling dsDNA into and through the RuvAB complex. RuvB forms 2 homohexamers on either side of HJ DNA bound by 1 or 2 RuvA tetramers; 4 subunits per hexamer contact DNA at a time. Coordinated motions by a converter formed by DNA-disengaged RuvB subunits stimulates ATP hydrolysis and nucleotide exchange. Immobilization of the converter enables RuvB to convert the ATP-contained energy into a lever motion, pulling 2 nucleotides of DNA out of the RuvA tetramer per ATP hydrolyzed, thus driving DNA branch migration. The RuvB motors rotate together with the DNA substrate, which together with the progressing nucleotide cycle form the mechanistic basis for DNA recombination by continuous HJ branch migration. Branch migration allows RuvC to scan DNA until it finds its consensus sequence, where it cleaves and resolves cruciform DNA. This Anaplasma phagocytophilum (strain HZ) protein is Holliday junction branch migration complex subunit RuvB.